The sequence spans 555 residues: Glutamine--tRNA ligase (555 aa).

Positions 34-44 match the 'HIGH' region motif; that stretch reads PEPNGYLHIGH. ATP is bound by residues 35 to 37 and 41 to 47; these read EPN and HIGHAKS. The L-glutamine site is built by Asp67 and Tyr212. ATP contacts are provided by residues Thr231, 261–262, and 269–271; these read RL and MSK. The 'KMSKS' region motif lies at 268–272; the sequence is VMSKR.

Belongs to the class-I aminoacyl-tRNA synthetase family. In terms of assembly, monomer.

It localises to the cytoplasm. It carries out the reaction tRNA(Gln) + L-glutamine + ATP = L-glutaminyl-tRNA(Gln) + AMP + diphosphate. The chain is Glutamine--tRNA ligase from Proteus mirabilis (strain HI4320).